Consider the following 187-residue polypeptide: Intermembrane transport lipoprotein PqiC (187 aa).

The signal sequence occupies residues 1-15 (MKKWLVTIAALWLAG). Cys-16 is lipidated: N-palmitoyl cysteine. Cys-16 is lipidated: S-diacylglycerol cysteine.

In terms of assembly, may form a complex composed of PqiA, PqiB and PqiC. Interacts with PqiB.

The protein localises to the cell outer membrane. Component of a transport pathway that contributes to membrane integrity. The polypeptide is Intermembrane transport lipoprotein PqiC (Escherichia coli (strain K12)).